Consider the following 957-residue polypeptide: Dystrophin-related protein 2 (957 aa).

Spectrin repeat units follow at residues 102–179 (DHSG…EELE) and 231–337 (EQLL…QLQD). In terms of domain architecture, WW spans 358 to 383 (WERAISPNKVPYYINHQAQTTCWDHP). The ZZ-type; degenerate zinc finger occupies 605 to 661 (KHQTKCSICRQCPIKGFRYRSLKQFNVDICQTCFLTGRASKGNKLHYPIMEYYTPTT). Residues Cys610, Cys613, Cys634, and Cys637 each coordinate Zn(2+). Residue Ser748 is modified to Phosphoserine. A compositionally biased stretch (low complexity) spans 877 to 900 (PPTESDGSGSAGSSLASSPQQSEG). The tract at residues 877–923 (PPTESDGSGSAGSSLASSPQQSEGSHPREKGQTTPDTEAADDVGSKS) is disordered. Position 910 is a phosphothreonine (Thr910).

Interacts with PRX; this enhances phosphorylation. Identified in a dystroglycan complex that contains at least PRX, DRP2, UTRN, DMD and DAG1. As to expression, detected in fetal brain.

Its subcellular location is the postsynaptic density. The protein resides in the cell projection. It is found in the dendrite. The protein localises to the perikaryon. It localises to the cell membrane. Required for normal myelination and for normal organization of the cytoplasm and the formation of Cajal bands in myelinating Schwann cells. Required for normal PRX location at appositions between the abaxonal surface of the myelin sheath and the Schwann cell plasma membrane. Possibly involved in membrane-cytoskeleton interactions of the central nervous system. In Homo sapiens (Human), this protein is Dystrophin-related protein 2 (DRP2).